The following is a 309-amino-acid chain: Homoserine kinase (309 aa).

ATP is bound at residue 91 to 101 (PIGSGLGSSAC).

It belongs to the GHMP kinase family. Homoserine kinase subfamily.

It is found in the cytoplasm. It carries out the reaction L-homoserine + ATP = O-phospho-L-homoserine + ADP + H(+). Its pathway is amino-acid biosynthesis; L-threonine biosynthesis; L-threonine from L-aspartate: step 4/5. Functionally, catalyzes the ATP-dependent phosphorylation of L-homoserine to L-homoserine phosphate. The chain is Homoserine kinase from Salmonella arizonae (strain ATCC BAA-731 / CDC346-86 / RSK2980).